We begin with the raw amino-acid sequence, 224 residues long: Endoplasmic reticulum vesicle protein 25 (224 aa).

The signal sequence occupies residues 1–25 (MIPPRSLGSTAALLLVLLFTTLASA). At 26–190 (IKFDLPSNAH…ADTNLSTNMR (165 aa)) the chain is on the lumenal side. Residues 38–131 (TKCIWNYALS…IPVVTIDLDV (94 aa)) enclose the GOLD domain. A helical membrane pass occupies residues 191 to 211 (VTNFAILTLIALIALGVWQVF). Residues 212–224 (HLRGFFKRKYLID) are Cytoplasmic-facing.

This sequence belongs to the EMP24/GP25L family.

The protein localises to the endoplasmic reticulum membrane. It is found in the golgi apparatus membrane. Its function is as follows. Constituent of COPII-coated endoplasmic reticulum-derived transport vesicles. Required for efficient transport of a subset of secretory proteins to the Golgi. Facilitates retrograde transport from the Golgi to the endoplasmic reticulum. The polypeptide is Endoplasmic reticulum vesicle protein 25 (ERV25) (Mycosarcoma maydis (Corn smut fungus)).